We begin with the raw amino-acid sequence, 147 residues long: UPF0306 protein YhbP (147 aa).

Belongs to the UPF0306 family.

In Escherichia coli O8 (strain IAI1), this protein is UPF0306 protein YhbP.